The chain runs to 591 residues: Metalloendopeptidase OPG085 (591 aa).

Position 41 (His41) interacts with Zn(2+). The active site involves Glu44. The Zn(2+) site is built by His45 and Glu112.

It belongs to the peptidase M44 family. Zn(2+) is required as a cofactor. Post-translationally, undergoes proteolytic processing during the course of infection. May be cleaved into 46 kDa and 22 kDa products (Potential).

It localises to the virion. Probably involved in maturation of some viral proteins by processing them preferentially at Ala-Gly-|-Ser/Thr/Lys motifs. Does not seem to be responsible for the cleavage of major core proteins. This is Metalloendopeptidase OPG085 (OPG085) from Monkeypox virus.